The primary structure comprises 206 residues: dITP/XTP pyrophosphatase (206 aa).

7–12 (TSNKDK) lines the substrate pocket. The active-site Proton acceptor is the aspartate 74. A Mg(2+)-binding site is contributed by aspartate 74. Substrate is bound by residues serine 75, 159–162 (FGYD), lysine 182, and 187–188 (HR).

Belongs to the HAM1 NTPase family. As to quaternary structure, homodimer. Mg(2+) is required as a cofactor.

It carries out the reaction XTP + H2O = XMP + diphosphate + H(+). The enzyme catalyses dITP + H2O = dIMP + diphosphate + H(+). It catalyses the reaction ITP + H2O = IMP + diphosphate + H(+). Functionally, pyrophosphatase that catalyzes the hydrolysis of nucleoside triphosphates to their monophosphate derivatives, with a high preference for the non-canonical purine nucleotides XTP (xanthosine triphosphate), dITP (deoxyinosine triphosphate) and ITP. Seems to function as a house-cleaning enzyme that removes non-canonical purine nucleotides from the nucleotide pool, thus preventing their incorporation into DNA/RNA and avoiding chromosomal lesions. The protein is dITP/XTP pyrophosphatase of Campylobacter hominis (strain ATCC BAA-381 / DSM 21671 / CCUG 45161 / LMG 19568 / NCTC 13146 / CH001A).